A 545-amino-acid polypeptide reads, in one-letter code: Chaperonin GroEL 2 (545 aa).

ATP contacts are provided by residues 29–32 (TLGP), 86–90 (DGTTT), Gly414, and Asp499.

This sequence belongs to the chaperonin (HSP60) family. Forms a cylinder of 14 subunits composed of two heptameric rings stacked back-to-back. Interacts with the co-chaperonin GroES.

Its subcellular location is the cytoplasm. The catalysed reaction is ATP + H2O + a folded polypeptide = ADP + phosphate + an unfolded polypeptide.. Together with its co-chaperonin GroES, plays an essential role in assisting protein folding. The GroEL-GroES system forms a nano-cage that allows encapsulation of the non-native substrate proteins and provides a physical environment optimized to promote and accelerate protein folding. The protein is Chaperonin GroEL 2 of Chloroflexus aurantiacus (strain ATCC 29366 / DSM 635 / J-10-fl).